The chain runs to 815 residues: Ent-sandaracopimara-8(14),15-diene synthase, chloroplastic (815 aa).

Residues 1–38 (MLPSSICSMGQIPRTSPHYYGMLPKQMSKGHPPMVTRA) constitute a chloroplast transit peptide. Residues aspartate 550, aspartate 554, asparagine 696, threonine 700, and glutamate 704 each contribute to the Mg(2+) site. The DDXXD motif signature appears at 550–554 (DDFFD).

It belongs to the terpene synthase family. The cofactor is Mg(2+).

Its subcellular location is the plastid. The protein resides in the chloroplast. It carries out the reaction ent-copalyl diphosphate = ent-sandaracopimara-8(14),15-diene + diphosphate. It catalyses the reaction 9alpha-copalyl diphosphate = (12E)-9alpha-labda-8(17),12,14-triene + diphosphate. Its function is as follows. Involved in the biosynthesis of oryzalexin A-F phytoalexins. Catalyzes the conversion of ent-copalyl diphosphate to the phytoalexin precursor ent-sandaracopimaradiene. The chain is Ent-sandaracopimara-8(14),15-diene synthase, chloroplastic from Oryza sativa subsp. japonica (Rice).